The chain runs to 544 residues: O-phosphoserine--tRNA(Cys) ligase (544 aa).

Substrate is bound by residues 194–196 (HMT), 239–241 (SAS), 281–282 (YY), and Asn335.

This sequence belongs to the class-II aminoacyl-tRNA synthetase family. O-phosphoseryl-tRNA(Cys) synthetase subfamily. Homotetramer. Interacts with SepCysS.

The enzyme catalyses tRNA(Cys) + O-phospho-L-serine + ATP = O-phospho-L-seryl-tRNA(Cys) + AMP + diphosphate. Its function is as follows. Catalyzes the attachment of O-phosphoserine (Sep) to tRNA(Cys). This chain is O-phosphoserine--tRNA(Cys) ligase, found in Methanopyrus kandleri (strain AV19 / DSM 6324 / JCM 9639 / NBRC 100938).